The following is a 401-amino-acid chain: Nodulation protein E (401 aa).

The Ketosynthase family 3 (KS3) domain occupies 2–400; that stretch reads DRRVVITGIG…GTNAVLAFRQ (399 aa). Residues Cys-162, His-294, and His-331 each act as for beta-ketoacyl synthase activity in the active site. A helical transmembrane segment spans residues 329–348; that stretch reads HAHCLGAASALEMIACVMAI.

It belongs to the thiolase-like superfamily. Beta-ketoacyl-ACP synthases family.

The protein localises to the cell inner membrane. Its function is as follows. Proposed to synthesize NOD factor fatty acyl chain. Involved in the synthesis of a highly unsaturated fatty acid moiety, which forms part of a lipo-oligosaccharide that is responsible for host specificity. The polypeptide is Nodulation protein E (nodE) (Rhizobium leguminosarum bv. trifolii).